The primary structure comprises 208 residues: Small ribosomal subunit protein eS8 (208 aa).

The segment at 1-27 is disordered; it reads MGISRDNWHKRRKTGGKRKPYHKKRKY. A lipid anchor (N-myristoyl glycine) is attached at glycine 2. Residues 8–26 are compositionally biased toward basic residues; that stretch reads WHKRRKTGGKRKPYHKKRK. An N6-acetyllysine mark is found at lysine 37 and lysine 128. Threonine 130 carries the post-translational modification Phosphothreonine. Serine 160 bears the Phosphoserine mark. Residues lysine 170 and lysine 193 each participate in a glycyl lysine isopeptide (Lys-Gly) (interchain with G-Cter in SUMO2) cross-link.

It belongs to the eukaryotic ribosomal protein eS8 family. Component of the small ribosomal subunit. Identified in a IGF2BP1-dependent mRNP granule complex containing untranslated mRNAs. Part of the small subunit (SSU) processome, composed of more than 70 proteins and the RNA chaperone small nucleolar RNA (snoRNA) U3.

The protein resides in the cytoplasm. It is found in the membrane. Its subcellular location is the nucleus. The protein localises to the nucleolus. Its function is as follows. Component of the small ribosomal subunit. The ribosome is a large ribonucleoprotein complex responsible for the synthesis of proteins in the cell. Part of the small subunit (SSU) processome, first precursor of the small eukaryotic ribosomal subunit. During the assembly of the SSU processome in the nucleolus, many ribosome biogenesis factors, an RNA chaperone and ribosomal proteins associate with the nascent pre-rRNA and work in concert to generate RNA folding, modifications, rearrangements and cleavage as well as targeted degradation of pre-ribosomal RNA by the RNA exosome. The sequence is that of Small ribosomal subunit protein eS8 (RPS8) from Oryctolagus cuniculus (Rabbit).